We begin with the raw amino-acid sequence, 337 residues long: Methionine import ATP-binding protein MetN (337 aa).

An ABC transporter domain is found at 4 to 240; sequence IKNLEITYPG…PWHPITKEFV (237 aa). 37-44 is a binding site for ATP; it reads GLSGAGKS.

The protein belongs to the ABC transporter superfamily. Methionine importer (TC 3.A.1.24) family. In terms of assembly, the complex is composed of two ATP-binding proteins (MetN), two transmembrane proteins (MetI) and a solute-binding protein (MetQ).

It localises to the cell membrane. It catalyses the reaction L-methionine(out) + ATP + H2O = L-methionine(in) + ADP + phosphate + H(+). The catalysed reaction is D-methionine(out) + ATP + H2O = D-methionine(in) + ADP + phosphate + H(+). In terms of biological role, part of the ABC transporter complex MetNIQ involved in methionine import. Responsible for energy coupling to the transport system. The sequence is that of Methionine import ATP-binding protein MetN from Carboxydothermus hydrogenoformans (strain ATCC BAA-161 / DSM 6008 / Z-2901).